The following is a 280-amino-acid chain: Putative sugar uptake protein (280 aa).

10 helical membrane passes run 4–21, 33–52, 56–78, 91–113, 117–136, 149–166, 176–195, 207–229, 233–255, and 262–279; these read LIAL…LIAG, MGLG…IHPA, ITIF…GQFI, LSTG…EWTS, YLIG…LTAI, IILL…SSFP, LFLP…LLVS, WLNI…SAQL, ITAF…FFIG, and ELIA…GAAI.

This sequence belongs to the GRP transporter (TC 2.A.7.5) family.

The protein resides in the cell membrane. The sequence is that of Putative sugar uptake protein from Lactobacillus helveticus (Lactobacillus suntoryeus).